Consider the following 654-residue polypeptide: Tumor necrosis factor alpha-induced protein 2 (654 aa).

Disordered regions lie at residues 1–38 and 50–78; these read MSEA…KKSK and GKKK…PPPT. Residues 28 to 38 show a composition bias toward basic residues; the sequence is KKKKEKKKKSK.

Belongs to the SEC6 family.

Functionally, may play a role as a mediator of inflammation and angiogenesis. The sequence is that of Tumor necrosis factor alpha-induced protein 2 (TNFAIP2) from Homo sapiens (Human).